Reading from the N-terminus, the 763-residue chain is MQNCRRCISLTGLLRMTLYLRPSFSIDLSLRRLHRAAFLFSRKKPETNLSTLFKPVQVHAYVDSEDVGSELSGKLEKAELLKILNKFTQRREIKSLCNENGLDDYLQQQAFGSFRRFCIEAENLPVDLHITFSDITQGAGHIDDIFPYFLRHAKTVFPHLDCMDDLKKISDLRQPANWYSNARAITRKIVFHAGPTNSGKTYHAMERYLSAKTGVYCGPLKLLATEVYNKANERGTPCDLVTGEERKFGISESLPANHVACTVEMTSVNTPYEVAVIDEIQQIRDPQRGWAWTRAFLGLIADEVHVCGEPGALDLLQKICETTGETVEVRLYDRLTELTVENTALGSLDNIVPGDCIVCFSKHDIYTVSREIEARGKEVAVIYGGLPPGTKLAQAAKFNDPANSCKVMVATDAIGMGLNLSIRRIIFYSLIKPSMNERGEREIDTISVSSALQIAGRAGRFRTQWEHGYVTAFKSEDLQTLQRILARTPEPIKQAGLHPTADQIELYAYHLPSSSLSNLMDIFVNLCTVDDSLYFMCNIEDFKFLAEMIQHVALPLRARYVFCCAPINRKMPFVCSMFLKVARQYSRNEPITFDFIKKNCGWPFKLPKTILDLVHLEAVFDVMDLYLWLSYRFMDLFPEAAYVRDAQKELDEIIQQGVFQITRLLKNTEASQDGETSNYAIRRITHVKEPRLPSLSRGRLTERLLAQGLLTPGMLSELRKEWDAQQLGKSNSQSNENSEPVVNSDDEDNYSGIGRKTRKKRRK.

The N-terminal 43 residues, 1–43, are a transit peptide targeting the mitochondrion; it reads MQNCRRCISLTGLLRMTLYLRPSFSIDLSLRRLHRAAFLFSRK. Residues 181 to 321 enclose the Helicase ATP-binding domain; the sequence is NARAITRKIV…ALDLLQKICE (141 aa). An ATP-binding site is contributed by 194–201; the sequence is GPTNSGKT. A Helicase C-terminal domain is found at 330 to 508; the sequence is RLYDRLTELT…PTADQIELYA (179 aa). The segment at 724 to 763 is disordered; the sequence is AQQLGKSNSQSNENSEPVVNSDDEDNYSGIGRKTRKKRRK. The segment covering 727–741 has biased composition (polar residues); that stretch reads LGKSNSQSNENSEPV.

The protein belongs to the helicase family. Mg(2+) is required as a cofactor. Mn(2+) serves as cofactor.

Its subcellular location is the mitochondrion. It catalyses the reaction ATP + H2O = ADP + phosphate + H(+). Functionally, major helicase player in mitochondrial RNA metabolism and maintenance. Likely component of the mitochondrial degradosome (mtEXO) complex, that degrades 3' overhang double-stranded RNA with a 3'-to-5' directionality in an ATP-dependent manner. ATPase and ATP-dependent multisubstrate helicase, able to unwind double-stranded (ds) DNA and RNA, and RNA/DNA heteroduplexes in the 5'-to-3' direction. Regulates mRNA stability and is required for the correct processing and maturation of mitochondrial transcripts. This Drosophila melanogaster (Fruit fly) protein is ATP-dependent RNA helicase SUV3 homolog, mitochondrial.